Consider the following 90-residue polypeptide: MLCAIYRSPKRDQTYLYIEKKDDFSRVPAELLASFGKPQFAMLLALNERKTLATADVEKVKNALIEQGFYLQVPPPPESLLKMHLGETKA.

The 85-residue stretch at 1–85 (MLCAIYRSPK…PPESLLKMHL (85 aa)) folds into the YcgL domain.

The protein is YcgL domain-containing protein YpsIP31758_2009 of Yersinia pseudotuberculosis serotype O:1b (strain IP 31758).